Here is a 148-residue protein sequence, read N- to C-terminus: Large ribosomal subunit protein bL9 (148 aa).

Belongs to the bacterial ribosomal protein bL9 family.

Its function is as follows. Binds to the 23S rRNA. This is Large ribosomal subunit protein bL9 from Ruminiclostridium cellulolyticum (strain ATCC 35319 / DSM 5812 / JCM 6584 / H10) (Clostridium cellulolyticum).